We begin with the raw amino-acid sequence, 458 residues long: tRNA-2-methylthio-N(6)-dimethylallyladenosine synthase (458 aa).

The MTTase N-terminal domain occupies 2-118 (PKLYIKTYGC…VFEHVDGILR (117 aa)). The [4Fe-4S] cluster site is built by C11, C47, C81, C170, C174, and C177. Residues 156 to 389 (PGVRSTAYVS…LAVVNEIAIR (234 aa)) form the Radical SAM core domain. Residues 392–455 (RDLVGTVQEV…GFTLYGVPCP (64 aa)) enclose the TRAM domain.

Belongs to the methylthiotransferase family. MiaB subfamily. As to quaternary structure, monomer. It depends on [4Fe-4S] cluster as a cofactor.

It localises to the cytoplasm. The enzyme catalyses N(6)-dimethylallyladenosine(37) in tRNA + (sulfur carrier)-SH + AH2 + 2 S-adenosyl-L-methionine = 2-methylsulfanyl-N(6)-dimethylallyladenosine(37) in tRNA + (sulfur carrier)-H + 5'-deoxyadenosine + L-methionine + A + S-adenosyl-L-homocysteine + 2 H(+). Functionally, catalyzes the methylthiolation of N6-(dimethylallyl)adenosine (i(6)A), leading to the formation of 2-methylthio-N6-(dimethylallyl)adenosine (ms(2)i(6)A) at position 37 in tRNAs that read codons beginning with uridine. This is tRNA-2-methylthio-N(6)-dimethylallyladenosine synthase from Akkermansia muciniphila (strain ATCC BAA-835 / DSM 22959 / JCM 33894 / BCRC 81048 / CCUG 64013 / CIP 107961 / Muc).